A 966-amino-acid chain; its full sequence is Phosphoenolpyruvate carboxylase, housekeeping isozyme (966 aa).

Phosphoserine is present on Ser11. Catalysis depends on residues His172 and Lys601.

This sequence belongs to the PEPCase type 1 family. As to quaternary structure, homotetramer. It depends on Mg(2+) as a cofactor.

It localises to the cytoplasm. It carries out the reaction oxaloacetate + phosphate = phosphoenolpyruvate + hydrogencarbonate. By light-reversible phosphorylation. Functionally, through the carboxylation of phosphoenolpyruvate (PEP) it forms oxaloacetate, a four-carbon dicarboxylic acid source for the tricarboxylic acid cycle. This Saccharum hybrid (Sugarcane) protein is Phosphoenolpyruvate carboxylase, housekeeping isozyme.